We begin with the raw amino-acid sequence, 163 residues long: Late embryogenesis abundant protein Dc3 (163 aa).

Disordered regions lie at residues 1-117 and 139-163; these read MASH…GGLM and FGMA…ARTE. Composition is skewed to basic and acidic residues over residues 28-56, 67-84, and 91-113; these read TMKD…ESKD, GAVK…KEKT, and TKEK…KEKT. Tandem repeats lie at residues 32-42, 43-53, 65-75, 76-86, 87-97, and 103-115. The interval 32-115 is 6 X 11 AA approximate repeats; it reads KAQAAKDKAS…AVAGKEKTGG (84 aa). The segment covering 152 to 163 has biased composition (low complexity); that stretch reads TTRVTRSSARTE.

This sequence belongs to the LEA type 4 family.

The polypeptide is Late embryogenesis abundant protein Dc3 (Daucus carota (Wild carrot)).